Consider the following 512-residue polypeptide: MMLQQVADALATHWLSGILAIATVYLATSYIIDYRRLRAFPGPPLGSFSYLWLAYNALQGRQGSIFYEVMKRYRVPEHSFVRIGPNDLMTDSPEVVRHMSSARSTYLRSSWYRTSKLDPSGDSLLSIMDTAHHDALKAKAGRGYAGRDNRNLESDIDDQLRRLIGLLERKYLSGGGDASSFRPVDMATTMQYFTLDSITKLAYSSAFGFLDLDTDVYGYIKAIRDAAPPIIVCSEWPLAGRIFFSPPFLKMFGPTPKDKSGVGKLMGTLRQVVASRFGPDAKDQPDMLGSFVRNGLSQHQCEQEVILQIVAGSDTTATALRGTLLQLCSTPMVYLKLQKEIDEAVRSGMVGEGVISQETARKLPYLQAVIYEGLRLNPPFTGALMKEVPPGGDEIDGVFIPAGVRIGVSAKGIQMRQDVYGHDVDVFRPERWTECDEQRRMRMAANTELVFGYGRWMCAGKNVAFMELNKVYFELLRRFDFQVVDTKTPVKEESFNVMFSKDMFMKVTKRVL.

The helical transmembrane segment at 13-32 (HWLSGILAIATVYLATSYII) threads the bilayer. Cys458 is a heme binding site.

This sequence belongs to the cytochrome P450 family. Requires heme as cofactor.

The protein resides in the membrane. It functions in the pathway hormone biosynthesis. Its function is as follows. Cytochrome P450 monooxygenase involved in the biosynthesis of abscisic acid (ABA), a phytohormone that acts antagonistically toward salicylic acid (SA), jasmonic acid (JA) and ethylene (ETH) signaling, to impede plant defense responses. During pathogen-host interaction, ABA plays a dual role in disease severity by increasing plant susceptibility and accelerating pathogenesis in the fungus itself. The first step of the pathway catalyzes the reaction from farnesyl diphosphate to alpha-ionylideneethane performed by the alpha-ionylideneethane synthase ABA3 via a three-step reaction mechanism involving 2 neutral intermediates, beta-farnesene and allofarnesene. The cytochrome P450 monooxygenase ABA1 might then be involved in the conversion of alpha-ionylideneethane to alpha-ionylideneacetic acid. Alpha-ionylideneacetic acid is further converted to abscisic acid in 2 steps involving the cytochrome P450 monooxygenase ABA2 and the short-chain dehydrogenase/reductase ABA4, via the intermediates 1'-deoxy-ABA or 1',4'-trans-diol-ABA, depending on the order of action of these 2 enzymes. ABA2 is responsible for the hydroxylation of carbon atom C-1' and ABA4 might be involved in the oxidation of the C-4' carbon atom. This Pyricularia oryzae (strain Y34) (Rice blast fungus) protein is Cytochrome P450 monooxygenase ABA1.